Reading from the N-terminus, the 95-residue chain is MSTHNNSPKEKPVDMNNISEKLDVVNNAPEKPAGANHIPEKLAEMTSSEWIAEYWKGINRGNDVPCCCPRKMTSADKKFSVFGKGYLMRSMQKDD.

The protein belongs to the asfivirus DP96R family.

Inhibits cGAS-STING-mediated type I IFN expression and NF-kB activation by inhibiting TBK1 and IKBKB/IKKB. Inhibits host TBK1 phosphorylation. The chain is TBK1 inhibitor DP96R from Ornithodoros (relapsing fever ticks).